A 371-amino-acid chain; its full sequence is 4-hydroxyphenylpyruvate dioxygenase-like protein (371 aa).

VOC domains lie at 7 to 135 (RLCH…LLQR) and 160 to 328 (HVDH…VFTK). Residues His-163, His-258, and Glu-339 each contribute to the Fe cation site.

Belongs to the 4HPPD family. The cofactor is Fe cation.

Its subcellular location is the mitochondrion. The enzyme catalyses 3-(4-hydroxyphenyl)pyruvate + O2 = (S)-4-hydroxymandelate + CO2. In terms of biological role, iron-dependent dioxygenase that catalyzes the conversion of 4-hydroxyphenylpyruvate (4-HPPA) to 4-hydroxymandelate (4-HMA) in the mitochondria, one of the steps in the biosynthesis of coenzyme Q10 from tyrosine. This is 4-hydroxyphenylpyruvate dioxygenase-like protein from Mus musculus (Mouse).